Here is a 187-residue protein sequence, read N- to C-terminus: HTH-type transcriptional repressor Rv1474c (187 aa).

Residues 10-70 enclose the HTH tetR-type domain; the sequence is AARRRQILDG…ALAREDTERM (61 aa). The segment at residues 33 to 52 is a DNA-binding region (H-T-H motif); the sequence is TVRRLEQAIGMSRGAIFHHF.

As to quaternary structure, homodimer.

Its activity is regulated as follows. Binding to DNA is abolished in the presence of high concentration of iron. Specifically binds to tetracycline, which leads to a conformational change in the structure of the protein and inhibits the DNA binding activity. Functionally, represses the expression of the aconitase gene acn and its own expression, in an iron-responsive manner. Binds to the inverted repeat element present in the upstream region of acn (Rv1475c)-Rv1474c operon. Preferentially binds to major groove of the DNA. The polypeptide is HTH-type transcriptional repressor Rv1474c (Mycobacterium tuberculosis (strain ATCC 25618 / H37Rv)).